The primary structure comprises 150 residues: Small ribosomal subunit protein uS7c (150 aa).

It belongs to the universal ribosomal protein uS7 family. As to quaternary structure, part of the 30S ribosomal subunit.

The protein localises to the plastid. The protein resides in the chloroplast. Functionally, one of the primary rRNA binding proteins, it binds directly to 16S rRNA where it nucleates assembly of the head domain of the 30S subunit. The polypeptide is Small ribosomal subunit protein uS7c (rps7) (Huperzia lucidula (Shining clubmoss)).